The primary structure comprises 103 residues: Putative ribosomal RNA-processing protein 7 homolog B (103 aa).

Over residues 1 to 19 (MEAYDQKIAEEEAKAKEEE) the composition is skewed to basic and acidic residues. The disordered stretch occupies residues 1–25 (MEAYDQKIAEEEAKAKEEEGVPDEE). Residues 71–100 (ESKMEHLAQLRKKFEEDKQRIELLRAQRKF) adopt a coiled-coil conformation.

The protein belongs to the RRP7 family.

In Homo sapiens (Human), this protein is Putative ribosomal RNA-processing protein 7 homolog B.